A 661-amino-acid polypeptide reads, in one-letter code: Fusaric acid cluster transcription factor FUB12 (661 aa).

Positions 17–48 (CVPCRTRKIKCNAAVVGLPCGSCVSRECPDEC) form a DNA-binding region, zn(2)-C6 fungal-type. 2 disordered regions span residues 56–132 (RTVK…PPGQ) and 151–184 (SAAQ…PQLD). Positions 73–98 (PDTNGSVLSPRQQQLPTNVSRQATDS) are enriched in polar residues. The segment covering 99–109 (SHSDPVEESIH) has biased composition (basic and acidic residues). Over residues 110 to 119 (ASHTGSSLRN) the composition is skewed to polar residues. Basic and acidic residues predominate over residues 120 to 129 (DTPHSRDRRP).

It is found in the nucleus. In terms of biological role, transcription factor that is involved in the formation of the two Fusaric acid derivatives, dehydrofusaric acid and fusarinolic acid, serving as a detoxification mechanism. This chain is Fusaric acid cluster transcription factor FUB12, found in Gibberella moniliformis (strain M3125 / FGSC 7600) (Maize ear and stalk rot fungus).